A 152-amino-acid chain; its full sequence is Regulatory protein RecX (152 aa).

The protein belongs to the RecX family.

The protein resides in the cytoplasm. Modulates RecA activity. The polypeptide is Regulatory protein RecX (Chromobacterium violaceum (strain ATCC 12472 / DSM 30191 / JCM 1249 / CCUG 213 / NBRC 12614 / NCIMB 9131 / NCTC 9757 / MK)).